The following is a 98-amino-acid chain: Large ribosomal subunit protein uL23 (98 aa).

The protein belongs to the universal ribosomal protein uL23 family. Part of the 50S ribosomal subunit. Contacts protein L29, and trigger factor when it is bound to the ribosome.

Its function is as follows. One of the early assembly proteins it binds 23S rRNA. One of the proteins that surrounds the polypeptide exit tunnel on the outside of the ribosome. Forms the main docking site for trigger factor binding to the ribosome. In Marinomonas sp. (strain MWYL1), this protein is Large ribosomal subunit protein uL23.